A 305-amino-acid polypeptide reads, in one-letter code: RNA-binding protein with serine-rich domain 1 (305 aa).

Positions 1 to 10 are enriched in basic residues; the sequence is MDLSGVKKKS. Residues 1–161 form a necessary for interaction with SRP54, nuclear localization and exon-skipping region; the sequence is MDLSGVKKKS…KRRSPSPKPT (161 aa). The segment at 1–170 is disordered; it reads MDLSGVKKKS…TKVHIGRLTR (170 aa). The segment at 1-220 is necessary for interaction with the cleaved p110 isoform of CDC2L1; it reads MDLSGVKKKS…ENPDEAEKAL (220 aa). Residues K7 and K15 each participate in a glycyl lysine isopeptide (Lys-Gly) (interchain with G-Cter in SUMO2) cross-link. Over residues 33–59 the composition is skewed to basic and acidic residues; it reads DRSDEKSKDRSKDKGTTKESSEKDRGR. A Phosphoserine modification is found at S53. Positions 68–126 are enriched in low complexity; that stretch reads ASSGSSSTRSRSSSTSSSGSSTSTGSSSGSSSSSASSRSGSSSTSRSSSSSSSSGSPSP. Residues 69–121 are necessary for interactions with UPF2 and UPF3B and UPF2-dependent NMD; it reads SSGSSSTRSRSSSTSSSGSSTSTGSSSGSSSSSASSRSGSSSTSRSSSSSSSS. Composition is skewed to basic residues over residues 127 to 143 and 151 to 167; these read SRRR…KSKP and RKRR…HIGR. S155 and S157 each carry phosphoserine. Residues 156-242 form a necessary for interaction with PNN and exon-skipping region; sequence PSPKPTKVHI…ITATAVLAPW (87 aa). The interval 159 to 244 is interaction with SAP18 and ACIN1; it reads KPTKVHIGRL…ATAVLAPWPR (86 aa). T161 carries the phosphothreonine modification. In terms of domain architecture, RRM spans 161–240; it reads TKVHIGRLTR…QEITATAVLA (80 aa). K218 bears the N6-acetyllysine mark. A necessary for interaction with TRA2B, nuclear localization and exon-skipping region spans residues 238–305; it reads VLAPWPRPPP…RSRSSSNSSR (68 aa). Residues 240–305 are disordered; that stretch reads APWPRPPPRR…RSRSSSNSSR (66 aa). Positions 242–262 are enriched in pro residues; that stretch reads WPRPPPRRFSPPRRMLPPPPM. Positions 266–298 are enriched in basic residues; sequence SPPRMRRRSRSPRRRSPVRRRSRSPGRRRHRSR.

It belongs to the splicing factor SR family. As to quaternary structure, found in mRNA splicing-dependent exon junction complexes (EJC). Found in a post-splicing complex with NXF1, RBM8A, UPF1, UPF2, UPF3A, UPF3B and RNPS1. Component of the heterotrimeric ASAP (apoptosis- and splicing-associated protein) and PSAP complexes consisting of RNPS1, SAP18 and either ACIN1 or PNN, respectively; the ASAP and PSAP complexes probably are formed mutually exclusive. Component of the active spliceosome. Associates with polysomes. Interacts with the cleaved p110 isoform of CDC2L1, CSNK2A1, PNN, SART3, SRP54, SRRM1 and TRA2B/SFRS10. Phosphorylated on one or more of the four Ser/Thr residues (Ser-43, Thr-49, Ser-52 or Ser-53). Ser-53 phosphorylation site is important for splicing and translation stimulation activity in vitro.

It localises to the nucleus. The protein localises to the nucleus speckle. Its subcellular location is the cytoplasm. In terms of biological role, part of pre- and post-splicing multiprotein mRNP complexes. Auxiliary component of the splicing-dependent multiprotein exon junction complex (EJC) deposited at splice junction on mRNAs. The EJC is a dynamic structure consisting of core proteins and several peripheral nuclear and cytoplasmic associated factors that join the complex only transiently either during EJC assembly or during subsequent mRNA metabolism. Component of the ASAP and PSAP complexes which bind RNA in a sequence-independent manner and are proposed to be recruited to the EJC prior to or during the splicing process and to regulate specific excision of introns in specific transcription subsets. The ASAP complex can inhibit RNA processing during in vitro splicing reactions. The ASAP complex promotes apoptosis and is disassembled after induction of apoptosis. Enhances the formation of the ATP-dependent A complex of the spliceosome. Involved in both constitutive splicing and, in association with SRP54 and TRA2B/SFRS10, in distinctive modulation of alternative splicing in a substrate-dependent manner. Involved in the splicing modulation of BCL2L1/Bcl-X (and probably other apoptotic genes); specifically inhibits formation of proapoptotic isoforms such as Bcl-X(S); the activity is different from the established EJC assembly and function. Participates in mRNA 3'-end cleavage. Involved in UPF2-dependent nonsense-mediated decay (NMD) of mRNAs containing premature stop codons. Also mediates increase of mRNA abundance and translational efficiency. Binds spliced mRNA 20-25 nt upstream of exon-exon junctions. This chain is RNA-binding protein with serine-rich domain 1 (Rnps1), found in Rattus norvegicus (Rat).